Consider the following 502-residue polypeptide: Adenylate cyclase (502 aa).

Topologically, residues 1-25 are cytoplasmic; the sequence is MGDFCRRVDCKAMKFFALRSSIRTQ. A helical membrane pass occupies residues 26-46; sequence IMASTTLLILALIGAIVTVWA. Residues 47 to 203 lie on the Lumenal, thylakoid side of the membrane; that stretch reads KSESTLYHQE…RKVNLAVTNA (157 aa). Residues 204–226 traverse the membrane as a helical segment; sequence VNQALVVGFAGLNIGWICAYFLA. Residues 227–280 form the HAMP domain; the sequence is QHLSDPVRRLQISVAKIAGGDLQHRADIHSRADEIGALATSVNEMSAALQISFN. Residues 227–502 lie on the Cytoplasmic side of the membrane; it reads QHLSDPVRRL…EAISIYEVKA (276 aa). The region spanning 320 to 451 is the Guanylate cyclase domain; sequence TILFCDIRGY…DAVNVASRIE (132 aa). Mg(2+) contacts are provided by aspartate 325 and aspartate 369.

The protein belongs to the adenylyl cyclase class-3 family. Mg(2+) is required as a cofactor.

It localises to the cellular thylakoid membrane. The enzyme catalyses ATP = 3',5'-cyclic AMP + diphosphate. In terms of biological role, may function as a membrane-localized receptor protein. This chain is Adenylate cyclase (cya), found in Anabaena cylindrica.